The sequence spans 492 residues: Cholesteryl ester transfer protein (492 aa).

A signal peptide spans 1 to 17; sequence MLAVTLLSLALLGSTCA. The cysteines at positions 160 and 201 are disulfide-linked. Residue Asn-257 is glycosylated (N-linked (GlcNAc...) asparagine).

This sequence belongs to the BPI/LBP/Plunc superfamily. BPI/LBP family.

It localises to the secreted. It catalyses the reaction cholesteryl (9Z-octadecenoate)(in) = cholesteryl (9Z-octadecenoate)(out). The enzyme catalyses 1,2,3-tri-(9Z-octadecenoyl)-glycerol(in) = 1,2,3-tri-(9Z-octadecenoyl)-glycerol(out). The catalysed reaction is cholesteryl (9Z,12Z)-octadecadienoate(in) = cholesteryl (9Z,12Z)-octadecadienoate(out). Functionally, involved in the transfer of neutral lipids, including cholesteryl ester and triglyceride, among lipoprotein particles. Allows the net movement of cholesteryl ester from high density lipoproteins/HDL to triglyceride-rich very low density lipoproteins/VLDL, and the equimolar transport of triglyceride from VLDL to HDL. Regulates the reverse cholesterol transport, by which excess cholesterol is removed from peripheral tissues and returned to the liver for elimination. The sequence is that of Cholesteryl ester transfer protein from Cricetulus griseus (Chinese hamster).